Here is a 69-residue protein sequence, read N- to C-terminus: Putative membrane protein insertion efficiency factor (69 aa).

The protein belongs to the UPF0161 family.

It is found in the cell inner membrane. Could be involved in insertion of integral membrane proteins into the membrane. This Chromobacterium violaceum (strain ATCC 12472 / DSM 30191 / JCM 1249 / CCUG 213 / NBRC 12614 / NCIMB 9131 / NCTC 9757 / MK) protein is Putative membrane protein insertion efficiency factor.